We begin with the raw amino-acid sequence, 355 residues long: Ornithine transcarbamylase, mitochondrial (355 aa).

Residues 1-35 (MLFINLRTLLNNAALRNGHNFVVRNFRCGQPVQDK) constitute a mitochondrion transit peptide. Lys71 carries the N6-acetyllysine; alternate modification. Position 71 is an N6-succinyllysine; alternate (Lys71). An N6-succinyllysine modification is found at Lys81. The residue at position 89 (Lys89) is an N6-acetyllysine; alternate. Position 89 is an N6-succinyllysine; alternate (Lys89). 91-95 (STRTR) serves as a coordination point for carbamoyl phosphate. A Phosphoserine modification is found at Ser134. Arg142 is a carbamoyl phosphate binding site. Arg142 provides a ligand contact to L-ornithine. Lys145 is modified (N6-acetyllysine; alternate). Lys145 is modified (N6-succinyllysine; alternate). Position 169 (His169) interacts with carbamoyl phosphate. Asn200 contributes to the L-ornithine binding site. N6-acetyllysine; alternate is present on residues Lys222, Lys232, and Lys239. N6-succinyllysine; alternate occurs at positions 222, 232, and 239. N6-acetyllysine is present on Lys244. 264 to 268 (DTWIS) lines the L-ornithine pocket. An N6-succinyllysine mark is found at Lys275 and Lys290. Lys293 is modified (N6-acetyllysine; alternate). Position 293 is an N6-succinyllysine; alternate (Lys293). 303-306 (HCLP) serves as a coordination point for L-ornithine. Residue Cys304 is part of the active site. N6-acetyllysine; alternate is present on Lys308. At Lys308 the chain carries N6-succinyllysine; alternate. Carbamoyl phosphate is bound at residue Arg331. Arg331 is a binding site for L-ornithine.

The protein belongs to the aspartate/ornithine carbamoyltransferase superfamily. OTCase family. In terms of assembly, homotrimer. Acetylation at Lys-89 negatively regulates ornithine carbamoyltransferase activity in response to nutrient signals.

It localises to the mitochondrion matrix. The catalysed reaction is carbamoyl phosphate + L-ornithine = L-citrulline + phosphate + H(+). It functions in the pathway nitrogen metabolism; urea cycle; L-citrulline from L-ornithine and carbamoyl phosphate: step 1/1. Negatively regulated by lysine acetylation. Catalyzes the second step of the urea cycle, the condensation of carbamoyl phosphate with L-ornithine to form L-citrulline. The urea cycle ensures the detoxification of ammonia by converting it to urea for excretion. The sequence is that of Ornithine transcarbamylase, mitochondrial from Ovis aries (Sheep).